The following is a 392-amino-acid chain: Homoserine O-acetyltransferase (392 aa).

An AB hydrolase-1 domain is found at 52-356 (NVVVVLHALT…ICGHDGFLVE (305 aa)). The Nucleophile role is filled by Ser157. Arg227 is a binding site for substrate. Residues Asp320 and His350 contribute to the active site. Substrate is bound at residue Asp351. Residues 373-392 (SQSAGPGGAGPGSRKGTTRR) are disordered.

Belongs to the AB hydrolase superfamily. MetX family. Homodimer.

The protein localises to the cytoplasm. The enzyme catalyses L-homoserine + acetyl-CoA = O-acetyl-L-homoserine + CoA. It functions in the pathway amino-acid biosynthesis; L-methionine biosynthesis via de novo pathway; O-acetyl-L-homoserine from L-homoserine: step 1/1. In terms of biological role, transfers an acetyl group from acetyl-CoA to L-homoserine, forming acetyl-L-homoserine. The sequence is that of Homoserine O-acetyltransferase from Mycolicibacterium paratuberculosis (strain ATCC BAA-968 / K-10) (Mycobacterium paratuberculosis).